Consider the following 533-residue polypeptide: Apolipoprotein N-acyltransferase (533 aa).

5 helical membrane passes run 17 to 37 (FFLPLLSGLLLGISFPTWPAV), 72 to 92 (LLFCLIALWWVCLATFVGGIL), 116 to 136 (GFRSALLALPFIWTGWEWAYM), 165 to 185 (GVWGVSFWLLTFNVLVLLLFM), and 190 to 210 (FQVKVGIVMVMLVMIATPLLY). A CN hydrolase domain is found at 232 to 499 (VQPDIDPHEK…QSVLTADVPL (268 aa)). Catalysis depends on Glu274, which acts as the Proton acceptor. Lys352 is a catalytic residue. Catalysis depends on Cys410, which acts as the Nucleophile. The chain crosses the membrane as a helical span at residues 510-530 (PDLVPHVCLGIAGVLALVAAV).

It belongs to the CN hydrolase family. Apolipoprotein N-acyltransferase subfamily.

Its subcellular location is the cell inner membrane. The catalysed reaction is N-terminal S-1,2-diacyl-sn-glyceryl-L-cysteinyl-[lipoprotein] + a glycerophospholipid = N-acyl-S-1,2-diacyl-sn-glyceryl-L-cysteinyl-[lipoprotein] + a 2-acyl-sn-glycero-3-phospholipid + H(+). It participates in protein modification; lipoprotein biosynthesis (N-acyl transfer). Functionally, catalyzes the phospholipid dependent N-acylation of the N-terminal cysteine of apolipoprotein, the last step in lipoprotein maturation. The sequence is that of Apolipoprotein N-acyltransferase from Chlorobaculum tepidum (strain ATCC 49652 / DSM 12025 / NBRC 103806 / TLS) (Chlorobium tepidum).